A 475-amino-acid chain; its full sequence is Pregnancy-specific glycoprotein 22 (475 aa).

The first 35 residues, 1 to 35, serve as a signal peptide directing secretion; it reads MEVSSELLSNGWTSWQRVLLTASLLTCWLLPITAG. Ig-like V-type domains are found at residues 44-140, 162-260, and 280-380; these read KLVE…FLQV, PASV…YLQV, and PVPP…QVNV. N-linked (GlcNAc...) asparagine glycosylation is found at Asn103, Asn110, and Asn231. Positions 387–471 constitute an Ig-like C2-type domain; that stretch reads PVMRVTDSTV…SKTSLPVRLT (85 aa). Cys406 and Cys454 are joined by a disulfide.

This sequence belongs to the immunoglobulin superfamily. CEA family.

Its subcellular location is the secreted. May have an angiogenic function during early placental development. Binds to cell-surface heparan sulfate proteoglycans (HSPGs), and stimulates secretion of the proangiogenic factors VEGFA and TGFB from uterine dendritic cells and natural killer cells. Also induces endothelial tube formation in vitro. The polypeptide is Pregnancy-specific glycoprotein 22 (Mus musculus (Mouse)).